We begin with the raw amino-acid sequence, 672 residues long: Spermatid perinuclear RNA-binding protein (672 aa).

One can recognise a DZF domain in the interval 5-363 (RSFANDDRHV…ALKRPFEDGL (359 aa)). A disordered region spans residues 349-371 (GAGSSALKRPFEDGLGDDKDPNK). A compositionally biased stretch (basic and acidic residues) spans 357–371 (RPFEDGLGDDKDPNK). In terms of domain architecture, DRBM 1 spans 387–453 (DLMNALMRLN…AVKVLQAMGY (67 aa)). The span at 467–476 (DEKSDNESKN) shows a compositional bias: basic and acidic residues. A disordered region spans residues 467–514 (DEKSDNESKNDTVSSNSSNNTGNSTTETSSTLEVRTQGPILTASGKNP). Residues 477–497 (DTVSSNSSNNTGNSTTETSST) show a composition bias toward low complexity. The DRBM 2 domain maps to 510–576 (SGKNPVMELN…ALAALEKLFS (67 aa)). Arginine 612 and arginine 617 each carry asymmetric dimethylarginine.

In terms of assembly, interacts with EIF2AK2. Associates with microtubules; it is unsure whether such interaction is direct or indirect. As to expression, isoform 2 is expressed in spermatocytes (at protein level). Expressed in testis, thymus, ovary, liver, kidney, heart, spleen and brain. Expressed in cortex, dentate gyrus and Purkinje cell layer and granule cells of the cerebellum.

It is found in the cytoplasm. It localises to the cytoskeleton. Involved in spermatogenesis and sperm function. Plays a role in regulation of cell growth. Binds to double-stranded DNA and RNA. Binds most efficiently to poly(I:C) RNA than to poly(dI:dC) DNA. Also binds to single-stranded poly(G) RNA. Binds non-specifically to the mRNA PRM1 3'-UTR and adenovirus VA RNA. This chain is Spermatid perinuclear RNA-binding protein (Strbp), found in Mus musculus (Mouse).